The chain runs to 78 residues: Sec-independent protein translocase protein TatA (78 aa).

Residues 1–21 (MGMPSMPELLIILLIVVLLFG) traverse the membrane as a helical segment. The tract at residues 46–78 (DEEEVATENKKEIEEKTTASTTKTTADQDTTKA) is disordered. Residues 52–62 (TENKKEIEEKT) are compositionally biased toward basic and acidic residues. Residues 63-78 (TASTTKTTADQDTTKA) show a composition bias toward low complexity.

Belongs to the TatA/E family. The Tat system comprises two distinct complexes: a TatABC complex, containing multiple copies of TatA, TatB and TatC subunits, and a separate TatA complex, containing only TatA subunits. Substrates initially bind to the TatABC complex, which probably triggers association of the separate TatA complex to form the active translocon.

It localises to the cell inner membrane. Functionally, part of the twin-arginine translocation (Tat) system that transports large folded proteins containing a characteristic twin-arginine motif in their signal peptide across membranes. TatA could form the protein-conducting channel of the Tat system. The chain is Sec-independent protein translocase protein TatA from Nitratiruptor sp. (strain SB155-2).